Consider the following 270-residue polypeptide: Palmitoyltransferase ZDHHC12-A (270 aa).

Topologically, residues 1–8 (MNKSLFKS) are cytoplasmic. Residues 9–29 (GCLVRTAHVILTWIITLILFL) form a helical membrane-spanning segment. Topologically, residues 30-45 (HNTDLRRCQERGDLLQ) are lumenal. Residues 46 to 66 (PLVFSSVLLLSVLLYFTVSLM) traverse the membrane as a helical segment. Topologically, residues 67–145 (DPGFVLSDSQ…DNCVGELNHR (79 aa)) are cytoplasmic. The DHHC domain maps to 102–152 (RRCGYCFLLQPMRARHCKWCKRCVRRFDHHCPWIDNCVGELNHRWFLLYLC). C132 acts as the S-palmitoyl cysteine intermediate in catalysis. The chain crosses the membrane as a helical span at residues 146–166 (WFLLYLCVQFTAVCWGLQSAW). At 167-182 (SGFISAPSWQQWFTQN) the chain is on the lumenal side. A helical membrane pass occupies residues 183–203 (VFLLVAFAVTAVFSVVLLLLL). Residues 204–270 (CIHAYLASVN…MYIRHNNASV (67 aa)) are Cytoplasmic-facing.

The protein belongs to the DHHC palmitoyltransferase family.

The protein localises to the golgi apparatus membrane. It is found in the endoplasmic reticulum membrane. It catalyses the reaction L-cysteinyl-[protein] + hexadecanoyl-CoA = S-hexadecanoyl-L-cysteinyl-[protein] + CoA. Palmitoyltransferase that catalyzes the addition of palmitate onto various protein substrates. Has a palmitoyltransferase activity toward gephyrin/GPHN, regulating its clustering at synapses and its function in gamma-aminobutyric acid receptor clustering. Acts as an inhibitor of the NLRP3 inflammasome by mediating palmitoylation of NLRP3, thereby promoting NLRP3 degradation by the chaperone-mediated autophagy (CMA) process. The sequence is that of Palmitoyltransferase ZDHHC12-A from Danio rerio (Zebrafish).